A 206-amino-acid chain; its full sequence is Inner membrane-spanning protein YciB (206 aa).

A run of 5 helical transmembrane segments spans residues 22 to 42 (IYTA…LTYF), 50 to 70 (MQVI…FLHD), 76 to 96 (WKVT…HIMG), 118 to 138 (INWA…YVAF), and 148 to 168 (FKVF…GVYI). Over residues 178 to 189 (LPKDKHQQRDQE) the composition is skewed to basic and acidic residues. Residues 178 to 206 (LPKDKHQQRDQETQNDTQQELSGKNTEEK) are disordered. The span at 191–206 (QNDTQQELSGKNTEEK) shows a compositional bias: polar residues.

It belongs to the YciB family.

The protein localises to the cell inner membrane. Its function is as follows. Plays a role in cell envelope biogenesis, maintenance of cell envelope integrity and membrane homeostasis. The chain is Inner membrane-spanning protein YciB from Vibrio atlanticus (strain LGP32) (Vibrio splendidus (strain Mel32)).